Here is a 215-residue protein sequence, read N- to C-terminus: Chaperone protein TorD (215 aa).

It belongs to the TorD/DmsD family. TorD subfamily.

The protein localises to the cytoplasm. Its function is as follows. Involved in the biogenesis of TorA. Acts on TorA before the insertion of the molybdenum cofactor and, as a result, probably favors a conformation of the apoenzyme that is competent for acquiring the cofactor. This chain is Chaperone protein TorD, found in Vibrio parahaemolyticus serotype O3:K6 (strain RIMD 2210633).